A 284-amino-acid polypeptide reads, in one-letter code: MTSTQFDCQYCTASLLGKKYVLKDDNLYCISCYDRIFSNYCEQCKEPIESDSKDLCYKNRHWHEGCFRCNKCHHSLVEKPFVAKDERLLCTDCYSNECSSKCFHCKRTIMPGSRKMEFKGNYWHETCFVCEHCRQPIGTKPLISKESGNYCVPCFEKEFAHYCNFCKKVITSGGITFRDQIWHKECFLCSGCRKELYEEAFMSKDDFPFCLDCYNHLYAKKCAACTKPITGLRGAKFICFQDRQWHSECFNCGKCSVSLVGEGFLTQNMEILCRKCGSGADTDM.

Residues 8–32 (CQYCTASLLGKKYVLKDDNLYCISC) form a C4-type zinc finger. LIM zinc-binding domains lie at 39 to 100 (NYCE…ECSS), 101 to 160 (KCFH…KEFA), 161 to 220 (HYCN…LYAK), and 221 to 283 (KCAA…ADTD).

As to quaternary structure, interacts with CREM (via the third LIM domain). Interacts (via second LIM domain) with SPAG8.

It localises to the nucleus. In terms of biological role, may be involved in the regulation of spermatogenesis. Stimulates CREM transcriptional activity in a phosphorylation-independent manner. The sequence is that of Four and a half LIM domains protein 5 (Fhl5) from Rattus norvegicus (Rat).